The sequence spans 77 residues: MATGIPASELRELSNEELTTRLKESKEELFNLRFQMATGQLTNNRRLSVVKKDIARIYTVLRERELGLSTNPGGDAA.

The protein belongs to the universal ribosomal protein uL29 family.

The chain is Large ribosomal subunit protein uL29 from Corynebacterium urealyticum (strain ATCC 43042 / DSM 7109).